Reading from the N-terminus, the 304-residue chain is Glycine--tRNA ligase alpha subunit (304 aa).

Belongs to the class-II aminoacyl-tRNA synthetase family. In terms of assembly, tetramer of two alpha and two beta subunits.

The protein localises to the cytoplasm. It carries out the reaction tRNA(Gly) + glycine + ATP = glycyl-tRNA(Gly) + AMP + diphosphate. The polypeptide is Glycine--tRNA ligase alpha subunit (Yersinia enterocolitica serotype O:8 / biotype 1B (strain NCTC 13174 / 8081)).